The following is a 122-amino-acid chain: MAPRGRKRKAEAAVVAVAEKREKLANGGEGMEEATVVIEHCTSURVYGRNAAALSQALRLEAPELPVKVNPTKPRRGSFEVTLLRPDGSSAELWTGIKKGPPRKLKFPEPQEVVEELKKYLS.

N6-acetyllysine is present on K20. A cross-link (cysteinyl-selenocysteine (Cys-Sec); redox-active) is located at residues 41-44 (CTSU). A non-standard amino acid (selenocysteine) is located at residue U44.

It belongs to the SelWTH family.

In terms of biological role, may be involved in a redox-related process. In Homo sapiens (Human), this protein is Selenoprotein H.